Consider the following 160-residue polypeptide: MVPKLFTSQICLLLLLGLMGVEGSLHARPPQFTRAQWFAIQHISLNPPRCTIAMRAINNYRWRCKNQNTFLRTTFANVVNVCGNQSIRCPHNRTLNNCHRSRFRVPLLHCDLINPGAQNISNCTYADRPGRRFYVVACDNRDPRDSPRYPVVPVHLDTTI.

Positions 1–27 (MVPKLFTSQICLLLLLGLMGVEGSLHA) are cleaved as a signal peptide. Residues 28 to 72 (RPPQFTRAQWFAIQHISLNPPRCTIAMRAINNYRWRCKNQNTFLR) form a required for nearly all of the bactericidal activity; partially involved in LPS-binding and bacterial membrane depolarization region. Catalysis depends on His-42, which acts as the Proton acceptor. Intrachain disulfides connect Cys-50–Cys-110, Cys-64–Cys-123, Cys-82–Cys-138, and Cys-89–Cys-98. At Tyr-60 the chain carries 3'-nitrotyrosine. 65 to 69 (KNQNT) provides a ligand contact to substrate. Residues Asn-84, Asn-92, and Asn-119 are each glycosylated (N-linked (GlcNAc...) asparagine). The Proton donor role is filled by His-155.

Belongs to the pancreatic ribonuclease family. In terms of assembly, interacts with bacterial lipopolysaccharide (LPS) and lipoteichoic acid (LTA). In vitro interacts with and insert into lipid bilayers composed of dioleoyl phosphatidylcholine and dioleoyl phosphatidylglycerol. In vitro, tends to form amyloid-like aggregates at pH 3, but not at pH 5, nor 7.

It localises to the secreted. In terms of biological role, cytotoxin and helminthotoxin with low-efficiency ribonuclease activity. Possesses a wide variety of biological activities. Exhibits antibacterial activity, including cytoplasmic membrane depolarization of preferentially Gram-negative, but also Gram-positive strains. Promotes E.coli outer membrane detachment, alteration of the overall cell shape and partial loss of cell content. The chain is Eosinophil cationic protein (RNASE3) from Homo sapiens (Human).